The primary structure comprises 777 residues: Hepatocyte growth factor-regulated tyrosine kinase substrate (777 aa).

The VHS domain maps to 15-143 (ATSQLLLETD…IMKVEGHVFP (129 aa)). The segment at 160–220 (WVDAEECHRC…VCEPCFEQLN (61 aa)) adopts an FYVE-type zinc-finger fold. The Zn(2+) site is built by cysteine 166, cysteine 169, cysteine 182, cysteine 185, cysteine 190, and cysteine 193. Residue lysine 207 is modified to N6-acetyllysine. Residues cysteine 212 and cysteine 215 each coordinate Zn(2+). Positions 223 to 319 (AEGKAASTTE…SPVNSSAPLA (97 aa)) are disordered. The interval 225–541 (GKAASTTELP…QRLQEQEKER (317 aa)) is interaction with SNX1. The UIM domain maps to 258–277 (QEEEELQLALALSQSEAEEK). The span at 292–311 (AEPTPVASSAPPASSLYSSP) shows a compositional bias: low complexity. Tyrosine 308, tyrosine 329, and tyrosine 334 each carry phosphotyrosine. Residues 338–370 (KQEEARKSPTPSAPVPLTEPTAQPGEGHAIPAN) form a disordered region. An interaction with SNAP25 and TRAK2 region spans residues 443 to 541 (SINTMHPQLL…QRLQEQEKER (99 aa)). The interaction with STAM stretch occupies residues 452–570 (LELLNQLDER…FSLPYAQLQA (119 aa)). An interaction with NF2 region spans residues 478 to 777 (ARGALSALRE…GSEAQLISFD (300 aa)). Lysine 549 is subject to N6-succinyllysine. A compositionally biased stretch (low complexity) spans 645 to 658 (AAAQGPAGPTTSPA). 2 disordered regions span residues 645–698 (AAAQ…YMGS) and 712–777 (NLMP…ISFD). Composition is skewed to polar residues over residues 659–698 (YSSY…YMGS) and 730–739 (PYISGQQPVY). Over residues 753 to 777 (PPVAQQPPAQGPPAQGSEAQLISFD) the composition is skewed to low complexity.

In terms of assembly, component of the ESCRT-0 complex composed of STAM or STAM2 and HGS. Part of a complex at least composed of HSG, STAM2 (or probably STAM) and EPS15. Interacts with STAM. Interacts with STAM2. Interacts with EPS15; the interaction is direct, calcium-dependent and inhibited by SNAP25. Identified in a complex with STAM and LITAF. Found in a complex with STAM and E3 ligase ITCH and DTX3L. Interacts with E3 ligase DTX3L; the interaction brings together STAM and HSG, promotes their recruitment to early endosomes and decreases STAM and HGS ubiquitination by ITCH. Interacts with NF2; the interaction is direct. Interacts with ubiquitin; the interaction is direct. Interacts with VPS37C. Interacts with SMAD1, SMAD2 and SMAD3. Interacts with TSG101; the interaction mediates the association with the ESCRT-I complex. Interacts with SNAP25; the interaction is direct and decreases with addition of increasing concentrations of free calcium. Interacts with SNX1; the interaction is direct. Component of a 550 kDa membrane complex at least composed of HGS and SNX1 but excluding EGFR. Interacts with TRAK1. Interacts with TRAK2. Component of the CART complex, at least composed of ACTN4, HGS/HRS, MYO5B and TRIM3. Interacts (via UIM domain) with UBQLN1 (via ubiquitin-like domain). Interacts with ARRDC3. Identified in a complex containing at least ARRDC4, AVPR2 and HGS. Interacts with LAPTM4B; promotes HGS ubiquitination. Phosphorylated on Tyr-334. A minor site of phosphorylation on Tyr-329 is detected. Phosphorylation occurs in response to EGF, IL-2, GM-CSF and HGF. Post-translationally, ubiquitinated by ITCH.

It localises to the cytoplasm. The protein resides in the early endosome membrane. Its subcellular location is the endosome. The protein localises to the multivesicular body membrane. In terms of biological role, involved in intracellular signal transduction mediated by cytokines and growth factors. When associated with STAM it suppresses DNA signaling upon stimulation by IL-2 and GM-CSF. Could be a direct effector of PI3-kinase in vesicular pathway via early endosomes and may regulate trafficking to early and late endosomes by recruiting clathrin. May concentrate ubiquitinated receptors within clathrin-coated regions. Involved in down-regulation of receptor tyrosine kinase via multivesicular body (MVBs) when complexed with STAM (ESCRT-0 complex). The ESCRT-0 complex binds ubiquitin and acts as a sorting machinery that recognizes ubiquitinated receptors and transfers them to further sequential lysosomal sorting/trafficking processes. May contribute to the efficient recruitment of SMADs to the activin receptor complex. Involved in receptor recycling via its association with the CART complex, a multiprotein complex required for efficient transferrin receptor recycling but not for EGFR degradation. The sequence is that of Hepatocyte growth factor-regulated tyrosine kinase substrate (HGS) from Bos taurus (Bovine).